We begin with the raw amino-acid sequence, 400 residues long: MDSDAWEIIHIPEKPSLSPDHQPTVKVYASLIKPRFANTIVRHLCKIAPLEDLRHVKRVKKKILPDCGETQLTVILCLAPEHNDQLSDMPPDVQRLVDPYELSPFITQVCKYAAVSKEEWEEQSKIWPTSFHPPTYNIDGIGGFSEEETQSICKFMRVVIDMAVSGHTPLVNAAVIVDPSVRRIIASETDQVYASSAPRDMTSAETRPFEETGEICLNDTLEKQNGSLSALSCLNPWQWSLQPHDTENCSQWHPLRHASMVAIESSSARDRNLFPNPSKIFDQDHVPPSNTDSPAKKQKTSSQSPDVQNDSREETVRDPSMERPYLCTGYDIFLLLEPCTMCAMALVHQRIKRIFYAFPNTTAGGLGSVHRLQGEKSLNHHYAVFRVLLPDDALRQMTTV.

In terms of domain architecture, CMP/dCMP-type deaminase spans 250–385 (SQWHPLRHAS…KSLNHHYAVF (136 aa)). A Zn(2+)-binding site is contributed by His257. Residues 273 to 320 (LFPNPSKIFDQDHVPPSNTDSPAKKQKTSSQSPDVQNDSREETVRDPS) form a disordered region. Residues 309 to 320 (NDSREETVRDPS) show a composition bias toward basic and acidic residues. Residues Cys339 and Cys342 each contribute to the Zn(2+) site.

Belongs to the cytidine and deoxycytidylate deaminase family. ADAT3 subfamily. As to quaternary structure, interacts with TAD2.

The protein localises to the nucleus. Its subcellular location is the cytoplasm. The enzyme catalyses adenosine(34) in tRNA + H2O + H(+) = inosine(34) in tRNA + NH4(+). Functionally, involved in RNA editing. Catalyzes the specific deamination of adenosine-34 in several cytosolic tRNA species. Generates inosine at the wobble position of the anticodon loop. The chain is tRNA-specific adenosine deaminase TAD3 from Arabidopsis thaliana (Mouse-ear cress).